The primary structure comprises 289 residues: Diacylglycerol pyrophosphate phosphatase 1 (289 aa).

Over 1 to 21 (MNRVSFIKTPFNIGAKWRLED) the chain is Vacuolar. The chain crosses the membrane as a helical span at residues 22–42 (VFLLIIMILLNYPVYYQQPFE). Residues 43–65 (RQFYINDLTISHPYATTERVNNN) lie on the Cytoplasmic side of the membrane. The chain crosses the membrane as a helical span at residues 66 to 86 (MLFVYSFVVPSLTILIIGSIL). The Vacuolar portion of the chain corresponds to 87-92 (ADRRHL). The chain crosses the membrane as a helical span at residues 93–113 (IFILYTSLLGLSLAWFSTSFF). Topologically, residues 114 to 172 (TNFIKNWIGRLRPDFLDRCQPVEGLPLDTLFTAKDVCTTKNHERLLDGFRTTPSGHSSE) are cytoplasmic. The interval 118–126 (KNWIGRLRP) is phosphatase sequence motif I. The segment at 166–169 (PSGH) is phosphatase sequence motif II. 2 helical membrane-spanning segments follow: residues 173 to 193 (SFAG…TESP) and 194 to 214 (LMPL…ALIA). Over 215 to 222 (LSRTQDYR) the chain is Cytoplasmic. Residues 216–227 (SRTQDYRHHFVD) are phosphatase sequence motif III. The chain crosses the membrane as a helical span at residues 223–243 (HHFVDVILGSMLGYIMAHFFY). Topologically, residues 244 to 289 (RRIFPPIDDPLPFKPLMDDSDVTLEEAVTHQRIPDEELHPLSDEGM) are vacuolar. Serine 285 is modified (phosphoserine).

Belongs to the PA-phosphatase related phosphoesterase family.

The protein resides in the vacuole membrane. It catalyses the reaction a 1,2-diacyl-sn-glycerol 3-diphosphate + H2O = a 1,2-diacyl-sn-glycero-3-phosphate + phosphate + H(+). The catalysed reaction is a 1,2-diacyl-sn-glycero-3-phosphate + H2O = a 1,2-diacyl-sn-glycerol + phosphate. The enzyme catalyses a 1-acyl-sn-glycero-3-phosphate + H2O = a 1-acyl-sn-glycerol + phosphate. With respect to regulation, inhibited by sodium fluoride (NaF) and pyrophosphate. Strongly inhibited by manganese ion and, to a lower extent, by magnesium and calcium ions. Also inhibited by Cu(2+) ion. In an indirect manner, it is also inhibited by the zinc ion which is able to form a complex with DGPP and prevent the enzyme from removing the phosphate from the substrate. Not inhibited by N-ethylmaleimide. Functionally, catalyzes the dephosphorylation of diacylglycerol diphosphate (DGPP) to phosphatidate (PA) and the subsequent dephosphorylation of PA to diacylglycerol (DAG). Together with LPP1, regulates intracellular DGPP and PA levels, which are phospholipid molecules believed to play a signaling role in stress response. Can also use lysophosphatidic acid (LPA) and phosphatidylglycerophosphate as substrates. Substrate preference is DGPP &gt; LPA &gt; PA. Activity is independent of a divalent cation ion and insensitive to inhibition by N-ethylmaleimide. In Saccharomyces cerevisiae (strain ATCC 204508 / S288c) (Baker's yeast), this protein is Diacylglycerol pyrophosphate phosphatase 1 (DPP1).